A 396-amino-acid polypeptide reads, in one-letter code: Protein PIN-LIKES 5 (396 aa).

Residues 1-5 (MGFWS) lie on the Lumenal side of the membrane. A helical transmembrane segment spans residues 6-26 (LLEVASMPVIQVLFMSLVGAF). Over 27 to 45 (MASDRCKLFPVEARNSMNK) the chain is Cytoplasmic. The chain crosses the membrane as a helical span at residues 46–66 (VVFVLFAPALMFANLAQTVTL). Residues 67–73 (EDIISWW) are Lumenal-facing. The chain crosses the membrane as a helical span at residues 74 to 94 (FMPVNMGLTFLIGGLLGWLVV). Over 95-106 (KILKPPPYLEGL) the chain is Cytoplasmic. The helical transmembrane segment at 107-127 (IVATCSAGNMGNLPIILVPAI) threads the bilayer. Residues 128–144 (CDEDKSPFGNRSVCRTV) are Lumenal-facing. The helical transmembrane segment at 145-165 (GLSYASFSMALGGFYIWTYTF) threads the bilayer. The Cytoplasmic portion of the chain corresponds to 166–229 (RLIKGSAMKV…WRKGVDFLHE (64 aa)). A helical membrane pass occupies residues 230 to 250 (ILEELLAPPTLGAIIGFIFGA). At 251–273 (VRWLRNLIIGDDAPLRIVQSTAK) the chain is on the lumenal side. The chain crosses the membrane as a helical span at residues 274-294 (LLGDGTIPCMTIILGGNLIQG). At 295–312 (LRSSAVKPMVVLGIVCVR) the chain is on the cytoplasmic side. The helical transmembrane segment at 313 to 333 (YIAMPIIGIGIVLTAANLGFL) threads the bilayer. The Lumenal portion of the chain corresponds to 334-337 (PADP). A helical membrane pass occupies residues 338-358 (LFQYVLMLQFTLPPAMNIGTM). Over 359–370 (TQLYNVAQDECS) the chain is Cytoplasmic. The helical transmembrane segment at 371–391 (VLMLWTYLVAILALTVWSTIF) threads the bilayer. At 392-396 (LHLLV) the chain is on the lumenal side.

The protein belongs to the auxin efflux carrier (TC 2.A.69.2) family. In terms of tissue distribution, expressed in seedlings, cauline leaves and flowers.

Its subcellular location is the endoplasmic reticulum membrane. In terms of biological role, involved in cellular auxin homeostasis by regulating auxin metabolism. Regulates intracellular auxin accumulation at the endoplasmic reticulum and thus auxin availability for nuclear auxin signaling. The protein is Protein PIN-LIKES 5 of Arabidopsis thaliana (Mouse-ear cress).